The chain runs to 262 residues: Phosphatidylglycerol--prolipoprotein diacylglyceryl transferase 1 (262 aa).

4 helical membrane passes run 15–35 (WYGI…SINA), 40–60 (LNFD…IIGA), 83–103 (QGGL…FIYC), and 108–128 (VDFL…QGIG). Position 129 (arginine 129) interacts with a 1,2-diacyl-sn-glycero-3-phospho-(1'-sn-glycerol). 3 helical membrane passes run 169 to 189 (TFLY…IILY), 197 to 217 (GVVI…IEGL), and 229 to 249 (VAQL…IIIV).

It belongs to the Lgt family.

The protein localises to the cell membrane. It carries out the reaction L-cysteinyl-[prolipoprotein] + a 1,2-diacyl-sn-glycero-3-phospho-(1'-sn-glycerol) = an S-1,2-diacyl-sn-glyceryl-L-cysteinyl-[prolipoprotein] + sn-glycerol 1-phosphate + H(+). It participates in protein modification; lipoprotein biosynthesis (diacylglyceryl transfer). Its function is as follows. Catalyzes the transfer of the diacylglyceryl group from phosphatidylglycerol to the sulfhydryl group of the N-terminal cysteine of a prolipoprotein, the first step in the formation of mature lipoproteins. This is Phosphatidylglycerol--prolipoprotein diacylglyceryl transferase 1 from Clostridium perfringens (strain 13 / Type A).